Reading from the N-terminus, the 197-residue chain is Prefoldin subunit 3 (197 aa).

Residue alanine 2 is modified to N-acetylalanine. At lysine 59 the chain carries N6-acetyllysine.

This sequence belongs to the prefoldin subunit alpha family. Heterohexamer of two PFD-alpha type and four PFD-beta type subunits. Binds to the C-terminal part of VHL. In terms of tissue distribution, ubiquitous.

It is found in the cytoplasm. The protein resides in the nucleus. Functionally, binds specifically to cytosolic chaperonin (c-CPN) and transfers target proteins to it. Binds to nascent polypeptide chain and promotes folding in an environment in which there are many competing pathways for nonnative proteins. The protein is Prefoldin subunit 3 (VBP1) of Homo sapiens (Human).